Reading from the N-terminus, the 582-residue chain is V-type ATP synthase alpha chain (582 aa).

231 to 238 (GPFGSGKT) lines the ATP pocket.

This sequence belongs to the ATPase alpha/beta chains family.

It carries out the reaction ATP + H2O + 4 H(+)(in) = ADP + phosphate + 5 H(+)(out). In terms of biological role, produces ATP from ADP in the presence of a proton gradient across the membrane. The V-type alpha chain is a catalytic subunit. The chain is V-type ATP synthase alpha chain from Deinococcus geothermalis (strain DSM 11300 / CIP 105573 / AG-3a).